We begin with the raw amino-acid sequence, 1647 residues long: MAP kinase-activating death domain protein (1647 aa).

In terms of domain architecture, uDENN spans 14-268; sequence YLVIVGARHP…VPVSGQKRVD (255 aa). A compositionally biased stretch (basic and acidic residues) spans 108–122; the sequence is EKGEGGAGSRGKEGT. The segment at 108 to 168 is disordered; it reads EKGEGGAGSR…GKRRAKAGSR (61 aa). Residues 128-141 show a composition bias toward low complexity; that stretch reads SEEGGTESSESGSS. Residues 142-157 are compositionally biased toward polar residues; the sequence is LQPLSADSTPDVNQSP. The residue at position 156 (S156) is a Phosphoserine. Over residues 158-167 the composition is skewed to basic residues; it reads RGKRRAKAGS. The 141-residue stretch at 289 to 429 folds into the cDENN domain; it reads RFTLVDFPLH…ESLELKKHLK (141 aa). One can recognise a dDENN domain in the interval 431–565; sequence ALASMSLNTQ…LNPTNYAFQR (135 aa). Disordered regions lie at residues 604–636 and 678–842; these read ALSVPPERDSDSEPTDDSGSDSMDYDDSSSSYS and NQKE…STEG. Over residues 615-630 the composition is skewed to acidic residues; that stretch reads SEPTDDSGSDSMDYDD. Phosphoserine occurs at positions 689 and 692. Residues 689–699 show a composition bias toward polar residues; the sequence is SENSQENPPLR. Residues 700-712 are compositionally biased toward low complexity; the sequence is SSSSTTASSSPST. Basic and acidic residues predominate over residues 750 to 768; it reads NVDRRQAEIGEGSVRRRIY. A compositionally biased stretch (polar residues) spans 790–804; the sequence is ESYTPRFSQHVSGNR. 3 positions are modified to phosphoserine: S813, S818, and S820. Residues 827–840 are compositionally biased toward low complexity; that stretch reads RASSPNSTVSNTST. A phosphoserine mark is found at S858, S862, S916, S921, and S930. 3 disordered regions span residues 913 to 941, 1051 to 1110, and 1146 to 1243; these read QKSSVIKHSPTVKREPPSPQGRSSNSSEN, KEPD…DTRS, and VFDL…DSEI. Polar residues predominate over residues 932-941; it reads QGRSSNSSEN. The residue at position 1059 (S1059) is a Phosphoserine. Residues T1061 and T1066 each carry the phosphothreonine modification. The residue at position 1110 (S1110) is a Phosphoserine. 3 stretches are compositionally biased toward polar residues: residues 1158-1173, 1189-1207, and 1234-1243; these read QISADSGVSLTSSSQR, RSSSQDSEVSTVVSNSSGE, and SRGTLSDSEI. At T1237 the chain carries Phosphothreonine. Phosphoserine occurs at positions 1239 and 1270. The region spanning 1340 to 1415 is the Death domain; sequence GMDQGPQEMI…GLVYSQQINE (76 aa).

Belongs to the MADD family. Interacts (via death domain) with TNFRSF1A (via death domain). Interacts with PIDD1. Interacts with YWHAZ. Interacts (via death domain) with KIF1B; links the motor KIF1B to Rab3-carrying vesicles in anterograde synaptic vesicle transport. Interacts with KIF1A. Interacts (via uDENN domain) with RAB3A, RAB3B, RAB3C and RAB3D; the GTP-bound form of the Rab proteins is preferred for interaction. Expressed in testis, ovary, brain and heart. Expressed in spleen, thymus, prostate, testis, ovary, small instestine and colon. Expressed in liver. As to expression, not detected in the brain, breast, kidney, lung, ovary, pancreas, testis, uterus, stomach and thyroid. In terms of tissue distribution, expressed in the brain, breast, kidney, lung, ovary, pancreas, testis, uterus, stomach and thyroid.

Its subcellular location is the cell membrane. It localises to the cytoplasm. It is found in the cell projection. The protein resides in the axon. Its function is as follows. Guanyl-nucleotide exchange factor that regulates small GTPases of the Rab family. Converts GDP-bound inactive form of RAB27A and RAB27B to the GTP-bound active forms. Converts GDP-bound inactive form of RAB3A, RAB3C and RAB3D to the GTP-bound active forms, GTPases involved in synaptic vesicle exocytosis and vesicle secretion. Plays a role in synaptic vesicle formation and in vesicle trafficking at the neuromuscular junction. Involved in up-regulating a post-docking step of synaptic exocytosis in central synapses. Probably by binding to the motor proteins KIF1B and KIF1A, mediates motor-dependent transport of GTP-RAB3A-positive vesicles to the presynaptic nerve terminals. Plays a role in TNFA-mediated activation of the MAPK pathway, including ERK1/2. May link TNFRSF1A with MAP kinase activation. May be involved in the regulation of TNFA-induced apoptosis. This chain is MAP kinase-activating death domain protein, found in Homo sapiens (Human).